The primary structure comprises 218 residues: Probable GTP-binding protein EngB (218 aa).

In terms of domain architecture, EngB-type G spans 21-192; sequence NAPQIALAGR…WQELHRLAFP (172 aa). GTP-binding positions include 29-36, 56-60, 75-78, 142-145, and 171-173; these read GRSNVGKS, GKTRS, DLPG, TKAD, and FSS. Residues Ser-36 and Thr-58 each contribute to the Mg(2+) site. A disordered region spans residues 194–218; sequence MAFDTPSDGAPEPADEPEAASERAE.

This sequence belongs to the TRAFAC class TrmE-Era-EngA-EngB-Septin-like GTPase superfamily. EngB GTPase family. It depends on Mg(2+) as a cofactor.

Its function is as follows. Necessary for normal cell division and for the maintenance of normal septation. This is Probable GTP-binding protein EngB from Oleidesulfovibrio alaskensis (strain ATCC BAA-1058 / DSM 17464 / G20) (Desulfovibrio alaskensis).